A 427-amino-acid polypeptide reads, in one-letter code: Histidine--tRNA ligase (427 aa).

Belongs to the class-II aminoacyl-tRNA synthetase family. Homodimer.

It localises to the cytoplasm. It carries out the reaction tRNA(His) + L-histidine + ATP = L-histidyl-tRNA(His) + AMP + diphosphate + H(+). This is Histidine--tRNA ligase from Mannheimia succiniciproducens (strain KCTC 0769BP / MBEL55E).